A 239-amino-acid polypeptide reads, in one-letter code: tRNA (guanine-N(7)-)-methyltransferase (239 aa).

Positions 69, 94, 121, and 144 each coordinate S-adenosyl-L-methionine. The active site involves Asp-144. Lys-148 provides a ligand contact to substrate. The interval Arg-150–Arg-155 is interaction with RNA. Substrate-binding positions include Asp-180 and Thr-217 to Glu-220.

It belongs to the class I-like SAM-binding methyltransferase superfamily. TrmB family. Monomer.

It carries out the reaction guanosine(46) in tRNA + S-adenosyl-L-methionine = N(7)-methylguanosine(46) in tRNA + S-adenosyl-L-homocysteine. It participates in tRNA modification; N(7)-methylguanine-tRNA biosynthesis. Functionally, catalyzes the formation of N(7)-methylguanine at position 46 (m7G46) in tRNA. The polypeptide is tRNA (guanine-N(7)-)-methyltransferase (Shigella dysenteriae serotype 1 (strain Sd197)).